The following is a 601-amino-acid chain: Elongation factor 4 (601 aa).

A tr-type G domain is found at 6–188; that stretch reads KNIRNFSIIA…QIIKKIPAPD (183 aa). GTP-binding positions include 18 to 23 and 135 to 138; these read DHGKST and NKID.

This sequence belongs to the TRAFAC class translation factor GTPase superfamily. Classic translation factor GTPase family. LepA subfamily.

It is found in the cell membrane. The catalysed reaction is GTP + H2O = GDP + phosphate + H(+). In terms of biological role, required for accurate and efficient protein synthesis under certain stress conditions. May act as a fidelity factor of the translation reaction, by catalyzing a one-codon backward translocation of tRNAs on improperly translocated ribosomes. Back-translocation proceeds from a post-translocation (POST) complex to a pre-translocation (PRE) complex, thus giving elongation factor G a second chance to translocate the tRNAs correctly. Binds to ribosomes in a GTP-dependent manner. This Buchnera aphidicola subsp. Schizaphis graminum (strain Sg) protein is Elongation factor 4.